The following is a 331-amino-acid chain: Ketol-acid reductoisomerase (NADP(+)) (331 aa).

The KARI N-terminal Rossmann domain maps to 2–182; sequence AKMYYDQDAD…GGTKAGAIET (181 aa). NADP(+)-binding positions include 25–28, Ser51, Ser53, and 83–86; these read FGSQ and DEKQ. His108 is a catalytic residue. Gly134 provides a ligand contact to NADP(+). The KARI C-terminal knotted domain maps to 183-328; the sequence is TFKEETETDL…KSLREMMPWL (146 aa). The Mg(2+) site is built by Asp191, Glu195, Glu227, and Glu231. Residue Ser252 coordinates substrate.

This sequence belongs to the ketol-acid reductoisomerase family. Requires Mg(2+) as cofactor.

It carries out the reaction (2R)-2,3-dihydroxy-3-methylbutanoate + NADP(+) = (2S)-2-acetolactate + NADPH + H(+). The catalysed reaction is (2R,3R)-2,3-dihydroxy-3-methylpentanoate + NADP(+) = (S)-2-ethyl-2-hydroxy-3-oxobutanoate + NADPH + H(+). It functions in the pathway amino-acid biosynthesis; L-isoleucine biosynthesis; L-isoleucine from 2-oxobutanoate: step 2/4. It participates in amino-acid biosynthesis; L-valine biosynthesis; L-valine from pyruvate: step 2/4. Functionally, involved in the biosynthesis of branched-chain amino acids (BCAA). Catalyzes an alkyl-migration followed by a ketol-acid reduction of (S)-2-acetolactate (S2AL) to yield (R)-2,3-dihydroxy-isovalerate. In the isomerase reaction, S2AL is rearranged via a Mg-dependent methyl migration to produce 3-hydroxy-3-methyl-2-ketobutyrate (HMKB). In the reductase reaction, this 2-ketoacid undergoes a metal-dependent reduction by NADPH to yield (R)-2,3-dihydroxy-isovalerate. In Caldanaerobacter subterraneus subsp. tengcongensis (strain DSM 15242 / JCM 11007 / NBRC 100824 / MB4) (Thermoanaerobacter tengcongensis), this protein is Ketol-acid reductoisomerase (NADP(+)).